We begin with the raw amino-acid sequence, 264 residues long: NAD kinase (264 aa).

Aspartate 45 functions as the Proton acceptor in the catalytic mechanism. NAD(+)-binding positions include 45–46 (DG), histidine 50, 121–122 (NE), arginine 147, aspartate 149, alanine 184, and glutamine 224.

This sequence belongs to the NAD kinase family. A divalent metal cation serves as cofactor.

The protein resides in the cytoplasm. The catalysed reaction is NAD(+) + ATP = ADP + NADP(+) + H(+). In terms of biological role, involved in the regulation of the intracellular balance of NAD and NADP, and is a key enzyme in the biosynthesis of NADP. Catalyzes specifically the phosphorylation on 2'-hydroxyl of the adenosine moiety of NAD to yield NADP. The protein is NAD kinase of Lysinibacillus sphaericus (strain C3-41).